A 437-amino-acid chain; its full sequence is Probable N-acetylmuramidase (437 aa).

The N-terminal stretch at 1-57 is a signal peptide; it reads MPVSRVKVKNRHLKKKTKKPLAFYKPATKFAGAVLIAGTLTTTHELLLQQTSPMVQA. 3 disordered regions span residues 217 to 244, 290 to 320, and 367 to 392; these read SSAG…SSTT, ASST…SQTT, and AASN…NSNA. One can recognise a LysM 1 domain in the interval 243 to 286; it reads TTYTVKSGDTLWGISQRYGISVAQIQSANNLKSTIIYIGQKLVL. Low complexity predominate over residues 290–317; that stretch reads ASSTNSGGSNNSASTTPTTSVTPAKPTS. The 44-residue stretch at 319 to 362 folds into the LysM 2 domain; that stretch reads TTVKVKSGDTLWALSVKYKTSIAQLKSWNHLSSDTIYIGQNLIV. The 44-residue stretch at 393 to 436 folds into the LysM 3 domain; that stretch reads SIHKVVKGDTLWGLSQKSGSPIASIKAWNHLSSDTILIGQYLRI.

The protein belongs to the glycosyl hydrolase 73 family.

It localises to the secreted. It catalyses the reaction Hydrolysis of (1-&gt;4)-beta-linkages between N-acetylmuramic acid and N-acetyl-D-glucosamine residues in a peptidoglycan and between N-acetyl-D-glucosamine residues in chitodextrins.. Hydrolyzes the cell wall of L.lactis and M.lysodeikticus. Required for cell separation during growth. The polypeptide is Probable N-acetylmuramidase (acmA) (Lactococcus lactis subsp. cremoris (strain MG1363)).